The chain runs to 111 residues: Large ribosomal subunit protein uL24 (111 aa).

This sequence belongs to the universal ribosomal protein uL24 family. Part of the 50S ribosomal subunit.

Its function is as follows. One of two assembly initiator proteins, it binds directly to the 5'-end of the 23S rRNA, where it nucleates assembly of the 50S subunit. One of the proteins that surrounds the polypeptide exit tunnel on the outside of the subunit. The polypeptide is Large ribosomal subunit protein uL24 (Bifidobacterium longum (strain DJO10A)).